A 283-amino-acid polypeptide reads, in one-letter code: Protein BASIC PENTACYSTEINE1 (283 aa).

A disordered region spans residues 111-170; the sequence is RFEENPIPPPAPCEEQTGKKRKMRGSIATPTVPKAKKMRKPKEERDVTNNNVQQQQQRVK. Residues 158 to 169 show a composition bias toward low complexity; sequence TNNNVQQQQQRV.

Belongs to the BBR/BPC family. In terms of tissue distribution, expressed in seedlings, leaves and pistils. Detected in the base of flowers and tips of carpels, in leaf and sepal vasculature, in young rosette, in the lateral and tip of primary roots, and in the whole ovule.

Its subcellular location is the nucleus. Functionally, transcriptional regulator that specifically binds to GA-rich elements (GAGA-repeats) present in regulatory sequences of genes involved in developmental processes. Negatively regulates the homeotic gene AGL11/STK, which controls ovule primordium identity, by a cooperative binding to purine-rich elements present in the regulatory sequence leading to DNA conformational changes. This chain is Protein BASIC PENTACYSTEINE1 (BPC1), found in Arabidopsis thaliana (Mouse-ear cress).